A 119-amino-acid polypeptide reads, in one-letter code: Large ribosomal subunit protein uL18 (119 aa).

It belongs to the universal ribosomal protein uL18 family. As to quaternary structure, part of the 50S ribosomal subunit; part of the 5S rRNA/L5/L18/L25 subcomplex. Contacts the 5S and 23S rRNAs.

This is one of the proteins that bind and probably mediate the attachment of the 5S RNA into the large ribosomal subunit, where it forms part of the central protuberance. The sequence is that of Large ribosomal subunit protein uL18 from Ruegeria pomeroyi (strain ATCC 700808 / DSM 15171 / DSS-3) (Silicibacter pomeroyi).